Consider the following 419-residue polypeptide: Endothiapepsin (419 aa).

Residues 1–20 (MSSPLKNALVTAMLAGGALS) form the signal peptide. A propeptide spans 21–89 (SPTKQHVGIP…QNSTSGLAER (69 aa)) (activation peptide). One can recognise a Peptidase A1 domain in the interval 106–417 (YITPVQIGTP…GATTPTLGFA (312 aa)). Active-site residues include Asp124 and Ser288. Cys344 and Cys379 form a disulfide bridge.

This sequence belongs to the peptidase A1 family.

The catalysed reaction is Hydrolysis of proteins with specificity similar to that of pepsin A, prefers hydrophobic residues at P1 and P1', but does not cleave 14-Ala-|-Leu-15 in the B chain of insulin or Z-Glu-Tyr. Clots milk.. This Cryphonectria parasitica (Chestnut blight fungus) protein is Endothiapepsin (EAPA).